The primary structure comprises 586 residues: MGPSERPSIGWTPKEAEMQIGPQPDGWSRGWKPGDRGAVPLPLSPALSFLLLFPLASALQPTPLPFPELRLVGGPSRCRGRLEVMHSGSWGSVCDDDWDVVDANVVCRQLGCGLALPVPRPLAFGQGRGPIFLDNVECRGQEASLSECGSRGWGVHNCFHYEDVAVLCDEFLHTQPPTRKVLTSMAPATALQNGKGEGSVRLVGGASPCQGRVEILHGGVWGTVCDDDWGLQDAAVVCRQLGCGVALAATTNAFFGYGTGHILLDNVHCEGGEPRLAACQSLGWGVHNCGHHEDAGVLCAVLSPPTSTALPPSVTKEDWARHTGPAATGVGASPSRDTVWLTTAARASGKKSGRLRLVGGPSPCRGRVEVLYAGGWGTVCDDDWDFADARVACREAGCGPALGATGLGHFGYGRGPVLLDNVGCTGTEARLSDCFHLGWGQHNCGHHEDAGALCAGPEELGLQVQQAGSETTRMPSPRPRDGHLRLASGTHRCEGRVELFLGQRWGTVCDDAWDLRAAIVLCRQLGCGQALAAPGEAHFGPGRGPILLDNVKCRGDESTLLLCSHIRWDVHNCDHSEDASVLCQPL.

The interval 1 to 33 (MGPSERPSIGWTPKEAEMQIGPQPDGWSRGWKP) is disordered. An N-terminal signal peptide occupies residues 1–58 (MGPSERPSIGWTPKEAEMQIGPQPDGWSRGWKPGDRGAVPLPLSPALSFLLLFPLASA). SRCR domains are found at residues 69–169 (LRLV…VLCD), 200–300 (VRLV…VLCA), 355–455 (LRLV…ALCA), and 484–584 (LRLA…VLCQ). Disulfide bonds link Cys-94–Cys-158, Cys-107–Cys-168, Cys-138–Cys-148, Cys-225–Cys-289, Cys-238–Cys-299, Cys-269–Cys-279, Cys-380–Cys-444, Cys-393–Cys-454, Cys-424–Cys-434, Cys-509–Cys-573, Cys-522–Cys-583, and Cys-553–Cys-563.

It is found in the secreted. The protein is Scavenger receptor cysteine-rich domain-containing group B protein of Mus musculus (Mouse).